The primary structure comprises 430 residues: GPI mannosyltransferase 1 (430 aa).

The Cytoplasmic segment spans residues 1–11; the sequence is MELQSLIDTVS. Residues 12 to 32 traverse the membrane as a helical segment; that stretch reads LQKLLLLGALLRLILIAYAFF. At 33 to 72 the chain is on the lumenal side; sequence HDQWFRVKYTDIDYMIVVDGARHMWNGGSPFDRTTFRYTP. The helical transmembrane segment at 73–93 threads the bilayer; that stretch reads LLAALVMPSIWIANPMGKLIF. Over 94 to 115 the chain is Cytoplasmic; sequence ASSDLGAAWYCYGVLKSFAKER. The chain crosses the membrane as a helical span at residues 116–136; sequence SAKWMVSLFILFNPIVLSVST. Over 137–163 the chain is Lumenal; the sequence is RGNSDMLVTFMSLMVLSKFARRKCYQA. Residues 164-184 form a helical membrane-spanning segment; sequence AAVLGFAVHFKIYPIIYALPL. The Cytoplasmic portion of the chain corresponds to 185-206; sequence TLGVWEQSVAASTNTWRRVVKT. Residues 207-227 form a helical membrane-spanning segment; that stretch reads AVVVSICALMAAISFAVPTVL. Topologically, residues 228-360 are lumenal; the sequence is CYMKYGQQYL…AFKFFSWVKA (133 aa). A helical transmembrane segment spans residues 361–381; it reads LGVVLMWAATIPLWVTTAVPL. The Cytoplasmic portion of the chain corresponds to 382–388; the sequence is EFHGYSD. Residues 389–409 form a helical membrane-spanning segment; sequence FAQLWIVSCLFFLAMVVLASM. Residues 410–430 are Lumenal-facing; the sequence is LARIAYRVQCTKCSAKSIKVA.

Belongs to the PIGM family.

It localises to the endoplasmic reticulum membrane. The protein operates within glycolipid biosynthesis; glycosylphosphatidylinositol-anchor biosynthesis. In terms of biological role, mannosyltransferase involved in glycosylphosphatidylinositol-anchor biosynthesis. Transfers the first alpha-1,4-mannose to GlcN-PI during GPI precursor assembly. This is GPI mannosyltransferase 1 (PIGM) from Trypanosoma brucei brucei (strain 927/4 GUTat10.1).